We begin with the raw amino-acid sequence, 191 residues long: dITP/XTP pyrophosphatase (191 aa).

8-13 is a substrate binding site; the sequence is SKNQGK. Mg(2+)-binding residues include glutamate 38 and aspartate 67. The active-site Proton acceptor is aspartate 67. Substrate contacts are provided by residues serine 68, 146 to 149, lysine 169, and 174 to 175; these read FGYD and HR.

Belongs to the HAM1 NTPase family. In terms of assembly, homodimer. Mg(2+) serves as cofactor.

The enzyme catalyses XTP + H2O = XMP + diphosphate + H(+). The catalysed reaction is dITP + H2O = dIMP + diphosphate + H(+). It carries out the reaction ITP + H2O = IMP + diphosphate + H(+). Pyrophosphatase that catalyzes the hydrolysis of nucleoside triphosphates to their monophosphate derivatives, with a high preference for the non-canonical purine nucleotides XTP (xanthosine triphosphate), dITP (deoxyinosine triphosphate) and ITP. Seems to function as a house-cleaning enzyme that removes non-canonical purine nucleotides from the nucleotide pool, thus preventing their incorporation into DNA/RNA and avoiding chromosomal lesions. This Prochlorococcus marinus subsp. pastoris (strain CCMP1986 / NIES-2087 / MED4) protein is dITP/XTP pyrophosphatase.